The following is a 375-amino-acid chain: Carboxypeptidase O (375 aa).

The first 20 residues, 1–20, serve as a signal peptide directing secretion; sequence MKPLLGTFYLLGMLVPGWLG. The Peptidase M14 domain occupies 50–345; the sequence is RYHPMGEIYQ…EAVLSVLDDV (296 aa). 2 residues coordinate Zn(2+): His109 and Glu112. An N-linked (GlcNAc...) asparagine glycan is attached at Asn175. Residue His237 participates in Zn(2+) binding. Asn252 carries an N-linked (GlcNAc...) asparagine glycan. The active-site Proton donor/acceptor is the Glu311. Asn315 carries an N-linked (GlcNAc...) asparagine glycan. A lipid anchor (GPI-anchor amidated serine) is attached at Ser354. A propeptide spans 355–375 (removed in mature form); that stretch reads ARKAKSTALVLGLLMSFMSLL.

The protein belongs to the peptidase M14 family. Zn(2+) serves as cofactor.

It is found in the apical cell membrane. In terms of biological role, carboxypeptidase which preferentially cleaves C-terminal acidic residues from peptides and proteins. Can also cleave C-terminal hydrophobic amino acids, with a preference for small residues over large residues. In Bos taurus (Bovine), this protein is Carboxypeptidase O.